A 692-amino-acid polypeptide reads, in one-letter code: Elongation factor G (692 aa).

A tr-type G domain is found at 9–284 (HKVRNIGIAA…AVVDYLPAPD (276 aa)). GTP contacts are provided by residues 18-25 (AHIDAGKT), 82-86 (DTPGH), and 136-139 (NKMD).

This sequence belongs to the TRAFAC class translation factor GTPase superfamily. Classic translation factor GTPase family. EF-G/EF-2 subfamily.

The protein localises to the cytoplasm. Its function is as follows. Catalyzes the GTP-dependent ribosomal translocation step during translation elongation. During this step, the ribosome changes from the pre-translocational (PRE) to the post-translocational (POST) state as the newly formed A-site-bound peptidyl-tRNA and P-site-bound deacylated tRNA move to the P and E sites, respectively. Catalyzes the coordinated movement of the two tRNA molecules, the mRNA and conformational changes in the ribosome. This is Elongation factor G from Campylobacter concisus (strain 13826).